A 232-amino-acid chain; its full sequence is Ion-translocating oxidoreductase complex subunit E (232 aa).

The next 6 membrane-spanning stretches (helical) occupy residues 18-38 (GLVQ…ITNA), 39-59 (LGLG…VSLV), 69-89 (IPVF…LINA), 93-113 (GLYL…IIIG), 127-147 (AAFD…VLGA), and 182-202 (PFLL…LIAL).

It belongs to the NqrDE/RnfAE family. As to quaternary structure, the complex is composed of six subunits: RnfA, RnfB, RnfC, RnfD, RnfE and RnfG.

It localises to the cell inner membrane. Part of a membrane-bound complex that couples electron transfer with translocation of ions across the membrane. This is Ion-translocating oxidoreductase complex subunit E from Shewanella baltica (strain OS185).